The following is an 86-amino-acid chain: MGRTKVVGPAGRYGPRYGVSVRKRVRDILARRYQPHECPFCGSTGTVRRVSVGVWSCRKCGNTWAGAAYTPRSGLAKYFKRYIVRG.

Residues C38, C41, C57, and C60 each coordinate Zn(2+). The C4-type zinc finger occupies 38–60 (CPFCGSTGTVRRVSVGVWSCRKC).

Belongs to the eukaryotic ribosomal protein eL43 family. Putative zinc-binding subfamily. Part of the 50S ribosomal subunit. The cofactor is Zn(2+).

In terms of biological role, binds to the 23S rRNA. The protein is Large ribosomal subunit protein eL43 of Aeropyrum pernix (strain ATCC 700893 / DSM 11879 / JCM 9820 / NBRC 100138 / K1).